Consider the following 212-residue polypeptide: Pyridoxine/pyridoxamine 5'-phosphate oxidase (212 aa).

Substrate contacts are provided by residues 8 to 11 (RTDY) and K66. FMN is bound by residues 61–66 (RIVLLK), 76–77 (FT), K83, and Q105. The substrate site is built by Y123, R127, and S131. FMN-binding positions include 140-141 (QS) and W184. Residue 190–192 (RLH) participates in substrate binding. Residue R194 participates in FMN binding.

Belongs to the pyridoxamine 5'-phosphate oxidase family. In terms of assembly, homodimer. It depends on FMN as a cofactor.

It carries out the reaction pyridoxamine 5'-phosphate + O2 + H2O = pyridoxal 5'-phosphate + H2O2 + NH4(+). The enzyme catalyses pyridoxine 5'-phosphate + O2 = pyridoxal 5'-phosphate + H2O2. Its pathway is cofactor metabolism; pyridoxal 5'-phosphate salvage; pyridoxal 5'-phosphate from pyridoxamine 5'-phosphate: step 1/1. It functions in the pathway cofactor metabolism; pyridoxal 5'-phosphate salvage; pyridoxal 5'-phosphate from pyridoxine 5'-phosphate: step 1/1. Catalyzes the oxidation of either pyridoxine 5'-phosphate (PNP) or pyridoxamine 5'-phosphate (PMP) into pyridoxal 5'-phosphate (PLP). This chain is Pyridoxine/pyridoxamine 5'-phosphate oxidase, found in Ralstonia pickettii (strain 12J).